We begin with the raw amino-acid sequence, 408 residues long: uncharacterized protein (408 aa).

The tract at residues 49–77 (PRSSPEVQRKATAGENSEVGSPESSLSTS) is disordered. Over residues 62 to 77 (GENSEVGSPESSLSTS) the composition is skewed to polar residues. The 47-residue stretch at 124-170 (SFEFMQLPDTDICQIMSFLDAQSLLNLSQTCSHLRQLCLAHEDNAGK) folds into the F-box domain.

This is an uncharacterized protein from Caenorhabditis elegans.